A 245-amino-acid chain; its full sequence is Alpha carbonic anhydrase 2 (245 aa).

A signal peptide spans M1 to C23. The region spanning H37–T245 is the Alpha-carbonic anhydrase domain. An intrachain disulfide couples C62 to C222. N-linked (GlcNAc...) asparagine glycosylation occurs at N95. H103 acts as the Proton acceptor in catalysis. The N-linked (GlcNAc...) asparagine glycan is linked to N120. Zn(2+) contacts are provided by H130, H132, and H149. N156 is a glycosylation site (N-linked (GlcNAc...) asparagine). T218 to T219 is a binding site for substrate.

It belongs to the alpha-class carbonic anhydrase family. Zn(2+) is required as a cofactor. In terms of processing, N-glycosylated. Expressed in stems and roots.

The protein resides in the plastid. Its subcellular location is the chloroplast stroma. The catalysed reaction is hydrogencarbonate + H(+) = CO2 + H2O. In terms of biological role, reversible hydration of carbon dioxide. This chain is Alpha carbonic anhydrase 2 (ACA2), found in Arabidopsis thaliana (Mouse-ear cress).